The chain runs to 488 residues: Glutamyl-tRNA(Gln) amidotransferase subunit A, mitochondrial (488 aa).

Catalysis depends on charge relay system residues lysine 62 and serine 140. The Acyl-ester intermediate role is filled by serine 164. A disordered region spans residues 205 to 228 (GHDDNDPTSITPQTRERIQDRLSR). Residues 218–227 (TRERIQDRLS) show a composition bias toward basic and acidic residues.

The protein belongs to the amidase family. GatA subfamily. In terms of assembly, subunit of the heterotrimeric GatCAB amidotransferase (AdT) complex, composed of A, B and C subunits.

Its subcellular location is the mitochondrion. It carries out the reaction L-glutamyl-tRNA(Gln) + L-glutamine + ATP + H2O = L-glutaminyl-tRNA(Gln) + L-glutamate + ADP + phosphate + H(+). Its function is as follows. Allows the formation of correctly charged Gln-tRNA(Gln) through the transamidation of misacylated Glu-tRNA(Gln) in the mitochondria. The reaction takes place in the presence of glutamine and ATP through an activated gamma-phospho-Glu-tRNA(Gln). The polypeptide is Glutamyl-tRNA(Gln) amidotransferase subunit A, mitochondrial (Tuber melanosporum (strain Mel28) (Perigord black truffle)).